The following is an 88-amino-acid chain: MKFFLLFLVVLPIMGVLGKKNGFAVDSNGKAPECFFDHYCNSECTKVYYAEKGYCCTLSCYCVGLDDDKKVLDISDTRKKLCDFTLFN.

The signal sequence occupies residues 1–18 (MKFFLLFLVVLPIMGVLG). One can recognise an LCN-type CS-alpha/beta domain in the interval 20-83 (KNGFAVDSNG…ISDTRKKLCD (64 aa)). 4 disulfide bridges follow: Cys34-Cys55, Cys40-Cys60, Cys44-Cys62, and Cys56-Cys82.

This sequence belongs to the long (4 C-C) scorpion toxin superfamily. Sodium channel inhibitor family. Beta subfamily. Expressed by the venom gland.

Its subcellular location is the secreted. Functionally, excitatory insect toxins induce a spastic paralysis. They bind voltage-independently at site-4 of sodium channels (Nav) and shift the voltage of activation toward more negative potentials thereby affecting sodium channel activation and promoting spontaneous and repetitive firing. The chain is Beta-insect excitatory toxin LqhIT1d from Leiurus hebraeus (Hebrew deathstalker scorpion).